Here is a 634-residue protein sequence, read N- to C-terminus: uncharacterized protein (634 aa).

An N-terminal signal peptide occupies residues 1-40 (MWLQQRLKGLPGLLSSSWARRLLCLLGLLVLLLWFASSGA). At 41–589 (RRAAGGLHLP…DEHMAQQDPG (549 aa)) the chain is on the extracellular side. N-linked (GlcNAc...) asparagine glycosylation occurs at Asn-363. The chain crosses the membrane as a helical span at residues 590–610 (LPFLFWFSVASLITLFHLFLF). Topologically, residues 611–634 (KLIYNEYCGPGAKPLFRSKEDPSV) are cytoplasmic.

It localises to the membrane. This is an uncharacterized protein from Mus musculus (Mouse).